A 208-amino-acid chain; its full sequence is Uracil phosphoribosyltransferase (208 aa).

Residues Arg78, Arg103, and 130 to 138 (DPMLATGGS) each bind 5-phospho-alpha-D-ribose 1-diphosphate. Uracil is bound by residues Ile193 and 198-200 (GDA). Position 199 (Asp199) interacts with 5-phospho-alpha-D-ribose 1-diphosphate.

Belongs to the UPRTase family. Mg(2+) is required as a cofactor.

The enzyme catalyses UMP + diphosphate = 5-phospho-alpha-D-ribose 1-diphosphate + uracil. It participates in pyrimidine metabolism; UMP biosynthesis via salvage pathway; UMP from uracil: step 1/1. With respect to regulation, allosterically activated by GTP. In terms of biological role, catalyzes the conversion of uracil and 5-phospho-alpha-D-ribose 1-diphosphate (PRPP) to UMP and diphosphate. The polypeptide is Uracil phosphoribosyltransferase (Neisseria gonorrhoeae (strain ATCC 700825 / FA 1090)).